Consider the following 327-residue polypeptide: Probable cell division protein WhiA (327 aa).

The segment at residues 275–308 (SLEELGRLADPPMTKDAVAGRIRRLLSMADRKAK) is a DNA-binding region (H-T-H motif).

Belongs to the WhiA family.

Its function is as follows. Involved in cell division and chromosome segregation. In Mycobacterium bovis (strain ATCC BAA-935 / AF2122/97), this protein is Probable cell division protein WhiA.